We begin with the raw amino-acid sequence, 307 residues long: Stage III sporulation protein AA (307 aa).

An ATP-binding site is contributed by 143 to 150; that stretch reads GPPQTGKT.

The polypeptide is Stage III sporulation protein AA (spoIIIAA) (Bacillus subtilis (strain 168)).